The sequence spans 583 residues: Selenocysteine-specific elongation factor (583 aa).

Positions 5–203 constitute a tr-type G domain; sequence RVNVNVGVLG…LLKSQISIPT (199 aa). Positions 14–21 are G1; that stretch reads GHIDSGKT. GTP-binding residues include glycine 19, threonine 21, and alanine 22. Residue threonine 21 coordinates Mg(2+). Residues 46–50 form a G2 region; the sequence is GITLD. Mg(2+) is bound by residues threonine 48 and aspartate 78. The tract at residues 78–81 is G3; that stretch reads DCPG. The G4 stretch occupies residues 132-135; it reads NKID. Aspartate 135 and lysine 173 together coordinate GTP. Residues 171–173 form a G5 region; that stretch reads AAK. The tract at residues 371–390 is disordered; that stretch reads MPTATEGDDEADPKAGHAPG. Serine 524 carries the post-translational modification Phosphoserine. The segment at 528–562 is disordered; it reads KKILTPTLKKRSRAGRGETTKPEEGTERPEPIQPV. Threonine 532 carries the post-translational modification Phosphothreonine. The Nuclear localization signal motif lies at 534-540; sequence TLKKRSR. Residues 542 to 557 are compositionally biased toward basic and acidic residues; the sequence is GRGETTKPEEGTERPE. Residue arginine 543 is modified to Omega-N-methylarginine.

Belongs to the TRAFAC class translation factor GTPase superfamily. Classic translation factor GTPase family. SelB subfamily. Mg(2+) is required as a cofactor. Mn(2+) serves as cofactor.

It is found in the cytoplasm. Its subcellular location is the nucleus. The catalysed reaction is GTP + H2O = GDP + phosphate + H(+). Translation factor required for the incorporation of the rare amino acid selenocysteine encoded by UGA codons. Replaces the eRF1-eRF3-GTP ternary complex for the insertion of selenocysteine directed by the UGA codon. Insertion of selenocysteine at UGA codons is mediated by SECISBP2 and EEFSEC: SECISBP2 (1) specifically binds the SECIS sequence once the 80S ribosome encounters an in-frame UGA codon and (2) contacts the RPS27A/eS31 of the 40S ribosome before ribosome stalling. (3) GTP-bound EEFSEC then delivers selenocysteinyl-tRNA(Sec) to the 80S ribosome and adopts a preaccommodated state conformation. (4) After GTP hydrolysis, EEFSEC dissociates from the assembly, selenocysteinyl-tRNA(Sec) accommodates, and peptide bond synthesis and selenoprotein elongation occur. In Mus musculus (Mouse), this protein is Selenocysteine-specific elongation factor (Eefsec).